The following is a 320-amino-acid chain: Chitinase 3 (320 aa).

The signal sequence occupies residues 1 to 18 (MRALALAVVAMAVVAVRG). The 41-residue stretch at 19–59 (EQCGSQAGGALCPNCLCCSQYGWCGSTSDYCGAGCQSQCSG) folds into the Chitin-binding type-1 domain. 8 cysteine pairs are disulfide-bonded: C21–C36, C30–C42, C33–C61, C35–C49, C53–C57, C97–C159, C172–C180, and C279–C311. The Proton donor role is filled by E141.

The protein belongs to the glycosyl hydrolase 19 family. Chitinase class I subfamily. Expressed at low levels in roots, leaves, sheaths and meristems.

It carries out the reaction Random endo-hydrolysis of N-acetyl-beta-D-glucosaminide (1-&gt;4)-beta-linkages in chitin and chitodextrins.. Functionally, hydrolyzes chitin and plays a role in defense against fungal pathogens containing chitin. Inhibits the growth of T.reesei fungus on plate assay. In Oryza sativa subsp. japonica (Rice), this protein is Chitinase 3 (Cht3).